Consider the following 300-residue polypeptide: Acetyl-coenzyme A carboxylase carboxyl transferase subunit beta 1 (300 aa).

Residues 26–294 (MWVKCPSCGD…HTSAAQHVPA (269 aa)) enclose the CoA carboxyltransferase N-terminal domain. Residues cysteine 30, cysteine 33, cysteine 49, and cysteine 51 each contribute to the Zn(2+) site. The C4-type zinc finger occupies 30-51 (CPSCGDLIYTRQFSDNLKVCKC).

The protein belongs to the AccD/PCCB family. As to quaternary structure, acetyl-CoA carboxylase is a heterohexamer composed of biotin carboxyl carrier protein (AccB), biotin carboxylase (AccC) and two subunits each of ACCase subunit alpha (AccA) and ACCase subunit beta (AccD). Zn(2+) is required as a cofactor.

It localises to the cytoplasm. It catalyses the reaction N(6)-carboxybiotinyl-L-lysyl-[protein] + acetyl-CoA = N(6)-biotinyl-L-lysyl-[protein] + malonyl-CoA. It functions in the pathway lipid metabolism; malonyl-CoA biosynthesis; malonyl-CoA from acetyl-CoA: step 1/1. Functionally, component of the acetyl coenzyme A carboxylase (ACC) complex. Biotin carboxylase (BC) catalyzes the carboxylation of biotin on its carrier protein (BCCP) and then the CO(2) group is transferred by the transcarboxylase to acetyl-CoA to form malonyl-CoA. The polypeptide is Acetyl-coenzyme A carboxylase carboxyl transferase subunit beta 1 (Roseiflexus sp. (strain RS-1)).